The sequence spans 425 residues: Serine--tRNA ligase (425 aa).

Residues 41–70 (TERSQLQARSNQVGKQVGEKIKSGSDPKGT) are disordered. A compositionally biased stretch (polar residues) spans 44–54 (SQLQARSNQVG). Residues 57–70 (VGEKIKSGSDPKGT) show a composition bias toward basic and acidic residues. Residue 234-236 (TSE) coordinates L-serine. Residue 265–267 (RRE) coordinates ATP. Residue glutamate 288 coordinates L-serine. Residue 352-355 (EISS) coordinates ATP. Serine 388 is an L-serine binding site.

The protein belongs to the class-II aminoacyl-tRNA synthetase family. Type-1 seryl-tRNA synthetase subfamily. Homodimer. The tRNA molecule binds across the dimer.

The protein resides in the cytoplasm. It carries out the reaction tRNA(Ser) + L-serine + ATP = L-seryl-tRNA(Ser) + AMP + diphosphate + H(+). The enzyme catalyses tRNA(Sec) + L-serine + ATP = L-seryl-tRNA(Sec) + AMP + diphosphate + H(+). It functions in the pathway aminoacyl-tRNA biosynthesis; selenocysteinyl-tRNA(Sec) biosynthesis; L-seryl-tRNA(Sec) from L-serine and tRNA(Sec): step 1/1. Catalyzes the attachment of serine to tRNA(Ser). Is also able to aminoacylate tRNA(Sec) with serine, to form the misacylated tRNA L-seryl-tRNA(Sec), which will be further converted into selenocysteinyl-tRNA(Sec). The protein is Serine--tRNA ligase of Trichodesmium erythraeum (strain IMS101).